Reading from the N-terminus, the 214-residue chain is Protein OPG176 (214 aa).

Belongs to the orthopoxvirus OPG176 family. Tetramer. Interacts with host MYD88, TRF4, TICAM2 and MAL.

BCL2-like protein which disrupts the host immune response by inhibiting the TLR4 signaling pathway leading to NF-kappa-B activation. Acts close to the plasma membrane and targets several host TIR-domain containing adapter proteins including MYD88, TIRAP, TRIF and TICAM2. In turn, blocks the host NF-kappa-B and TRIF-mediated IRF3 activation. This chain is Protein OPG176 (OPG176), found in Homo sapiens (Human).